Here is a 344-residue protein sequence, read N- to C-terminus: Heat-inducible transcription repressor HrcA (344 aa).

It belongs to the HrcA family.

In terms of biological role, negative regulator of class I heat shock genes (grpE-dnaK-dnaJ and groELS operons). Prevents heat-shock induction of these operons. The sequence is that of Heat-inducible transcription repressor HrcA from Aster yellows witches'-broom phytoplasma (strain AYWB).